A 331-amino-acid chain; its full sequence is Gamma-parvin (331 aa).

Position 1 is an N-acetylmethionine (Met1). The segment at 18-38 (QPTEEELPRGGKKKYLSPNSK) is disordered. Calponin-homology (CH) domains follow at residues 44–151 (EELQ…KRFQ) and 210–317 (HAVQ…QKHS).

This sequence belongs to the parvin family. Interacts with ILK; the interaction promotes the establishment of cell polarity required for leukocyte migration. Interacts with ARHGEF6; the guanine nucleotide exchange factor activity of ARHGEF6 is essential for the PARVG-induced enhancement of cell spreading. Expressed strongly in spleen and testis, moderately in lung and weakly in brain and heart.

The protein localises to the cell junction. It is found in the focal adhesion. The protein resides in the cell membrane. It localises to the cytoplasm. Its subcellular location is the cytoskeleton. Plays a role with ILK in promoting the cell adhesion and spreading of leukocytes. The protein is Gamma-parvin (Parvg) of Mus musculus (Mouse).